The primary structure comprises 20 residues: Antimicrobial peptide EP-20 (20 aa).

The interval 1–20 (EGPVGLADPDGPASAPLGAP) is disordered.

The protein localises to the secreted. Functionally, the synthetic peptide inhibits growth of fungus P.capsici and partially that of V.dahliae, F.graminearum and F.omysporum. The chain is Antimicrobial peptide EP-20 from Xenorhabdus budapestensis.